The following is an 87-amino-acid chain: Small ribosomal subunit protein uS15 (87 aa).

Belongs to the universal ribosomal protein uS15 family. Part of the 30S ribosomal subunit. Forms a bridge to the 50S subunit in the 70S ribosome, contacting the 23S rRNA.

Its function is as follows. One of the primary rRNA binding proteins, it binds directly to 16S rRNA where it helps nucleate assembly of the platform of the 30S subunit by binding and bridging several RNA helices of the 16S rRNA. Functionally, forms an intersubunit bridge (bridge B4) with the 23S rRNA of the 50S subunit in the ribosome. In Clostridium perfringens (strain ATCC 13124 / DSM 756 / JCM 1290 / NCIMB 6125 / NCTC 8237 / Type A), this protein is Small ribosomal subunit protein uS15.